Reading from the N-terminus, the 293-residue chain is Kynurenine formamidase (293 aa).

An HGGXW motif is present at residues 84-88 (HGGYW). Serine 153 functions as the Nucleophile in the catalytic mechanism. Active-site residues include aspartate 236 and histidine 268.

This sequence belongs to the kynurenine formamidase family. Homodimer.

It localises to the cytoplasm. The protein localises to the cytosol. Its subcellular location is the nucleus. It carries out the reaction N-formyl-L-kynurenine + H2O = L-kynurenine + formate + H(+). It participates in amino-acid degradation; L-tryptophan degradation via kynurenine pathway; L-kynurenine from L-tryptophan: step 2/2. Its function is as follows. Catalyzes the hydrolysis of N-formyl-L-kynurenine to L-kynurenine, the second step in the kynurenine pathway of tryptophan degradation. Kynurenine may be further oxidized to nicotinic acid, NAD(H) and NADP(H). Required for elimination of toxic metabolites. The polypeptide is Kynurenine formamidase (afmid) (Danio rerio (Zebrafish)).